Consider the following 78-residue polypeptide: Large ribosomal subunit protein bL28 (78 aa).

Belongs to the bacterial ribosomal protein bL28 family.

This Methylococcus capsulatus (strain ATCC 33009 / NCIMB 11132 / Bath) protein is Large ribosomal subunit protein bL28.